The sequence spans 110 residues: UPF0060 membrane protein Noc_2955 (110 aa).

The next 4 membrane-spanning stretches (helical) occupy residues 7–27 (VGLF…AYLW), 33–53 (TIWL…LLSL), 63–83 (AAYG…VNGI), and 87–107 (TWDL…MFAP).

It belongs to the UPF0060 family.

It is found in the cell inner membrane. This Nitrosococcus oceani (strain ATCC 19707 / BCRC 17464 / JCM 30415 / NCIMB 11848 / C-107) protein is UPF0060 membrane protein Noc_2955.